Reading from the N-terminus, the 281-residue chain is Very long chain fatty acid elongase 7 (281 aa).

An N-acetylalanine modification is found at alanine 2. Residues 2 to 27 are Lumenal-facing; sequence AFSDLTSRTVRFYDNWIKDADPRVEN. The helical transmembrane segment at 28–48 threads the bilayer; the sequence is WLLMSSPLPQTIILGLYVYFV. Topologically, residues 49–72 are cytoplasmic; it reads TSLGPKLMENRKPFELKKAMITYN. The helical transmembrane segment at 73-93 threads the bilayer; it reads FFIVLFSVYMCYEFVMSGWGT. Residues 94–115 lie on the Lumenal side of the membrane; that stretch reads GYSFRCDIVDYSQSPRAMRMVH. The cysteines at positions 99 and 231 are disulfide-linked. Residues 116 to 136 form a helical membrane-spanning segment; that stretch reads TCWLYYFSKFIELFDTIFFVL. Lysine 124, arginine 137, lysine 139, glutamine 142, and histidine 147 together coordinate 3-oxoeicosanoyl-CoA. Residues 137-142 lie on the Cytoplasmic side of the membrane; it reads RKKNSQ. The helical transmembrane segment at 143–162 threads the bilayer; that stretch reads VTFLHVFHHTIMPWTWWFGV. The HxxHH motif motif lies at 147-151; sequence HVFHH. Residue histidine 150 is the Nucleophile of the active site. At 163 to 176 the chain is on the lumenal side; it reads KFAAGGLGTFHALL. Residues 177 to 197 traverse the membrane as a helical segment; it reads NTAVHVVMYFYYGLCAMGPAY. 3-oxoeicosanoyl-CoA-binding residues include tyrosine 187, lysine 204, threonine 208, and glutamine 211. Residues 198–206 lie on the Cytoplasmic side of the membrane; that stretch reads QKYLWWKKH. The helical transmembrane segment at 207–227 threads the bilayer; sequence LTSLQLVQFVLVTVHIGQIFF. Residues 228–236 are Lumenal-facing; the sequence is MEDCNYQYP. The helical transmembrane segment at 237–257 threads the bilayer; that stretch reads VFLYIIMSYGCIFLLLFLHFW. At 258 to 281 the chain is on the cytoplasmic side; sequence YRAYTKGQRLPKTMENGNCKSKHH. Arginine 266 is a binding site for 3-oxoeicosanoyl-CoA. The short motif at 277–281 is the Di-lysine motif element; sequence KSKHH.

It belongs to the ELO family. ELOVL7 subfamily. Homodimer. Interacts with TECR.

It is found in the endoplasmic reticulum membrane. It carries out the reaction a very-long-chain acyl-CoA + malonyl-CoA + H(+) = a very-long-chain 3-oxoacyl-CoA + CO2 + CoA. It catalyses the reaction eicosanoyl-CoA + malonyl-CoA + H(+) = 3-oxodocosanoyl-CoA + CO2 + CoA. The catalysed reaction is (5Z,8Z,11Z,14Z)-eicosatetraenoyl-CoA + malonyl-CoA + H(+) = (7Z,10Z,13Z,16Z)-3-oxodocosatetraenoyl-CoA + CO2 + CoA. The enzyme catalyses (6Z,9Z,12Z)-octadecatrienoyl-CoA + malonyl-CoA + H(+) = (8Z,11Z,14Z)-3-oxoeicosatrienoyl-CoA + CO2 + CoA. It carries out the reaction (9Z,12Z)-octadecadienoyl-CoA + malonyl-CoA + H(+) = (11Z,14Z)-3-oxoicosa-11,14-dienoyl-CoA + CO2 + CoA. It catalyses the reaction (9Z)-octadecenoyl-CoA + malonyl-CoA + H(+) = 3-oxo-(11Z)-eicosenoyl-CoA + CO2 + CoA. The catalysed reaction is octadecanoyl-CoA + malonyl-CoA + H(+) = 3-oxoeicosanoyl-CoA + CO2 + CoA. The enzyme catalyses hexadecanoyl-CoA + malonyl-CoA + H(+) = 3-oxooctadecanoyl-CoA + CO2 + CoA. It carries out the reaction (9Z,12Z,15Z)-octadecatrienoyl-CoA + malonyl-CoA + H(+) = (11Z,14Z,17Z)-3-oxoeicosatrienoyl-CoA + CO2 + CoA. It functions in the pathway lipid metabolism; fatty acid biosynthesis. Its function is as follows. Catalyzes the first and rate-limiting reaction of the four reactions that constitute the long-chain fatty acids elongation cycle. This endoplasmic reticulum-bound enzymatic process allows the addition of 2 carbons to the chain of long- and very long-chain fatty acids (VLCFAs) per cycle. Condensing enzyme with higher activity toward C18 acyl-CoAs, especially C18:3(n-3) acyl-CoAs and C18:3(n-6)-CoAs. Also active toward C20:4-, C18:0-, C18:1-, C18:2- and C16:0-CoAs, and weakly toward C20:0-CoA. Little or no activity toward C22:0-, C24:0-, or C26:0-CoAs. May participate in the production of saturated and polyunsaturated VLCFAs of different chain lengths that are involved in multiple biological processes as precursors of membrane lipids and lipid mediators. The chain is Very long chain fatty acid elongase 7 from Rattus norvegicus (Rat).